Here is a 166-residue protein sequence, read N- to C-terminus: Large ribosomal subunit protein uL10 (166 aa).

This sequence belongs to the universal ribosomal protein uL10 family. In terms of assembly, part of the ribosomal stalk of the 50S ribosomal subunit. The N-terminus interacts with L11 and the large rRNA to form the base of the stalk. The C-terminus forms an elongated spine to which L12 dimers bind in a sequential fashion forming a multimeric L10(L12)X complex.

Its function is as follows. Forms part of the ribosomal stalk, playing a central role in the interaction of the ribosome with GTP-bound translation factors. In Pseudomonas fluorescens (strain ATCC BAA-477 / NRRL B-23932 / Pf-5), this protein is Large ribosomal subunit protein uL10.